A 115-amino-acid polypeptide reads, in one-letter code: Parathyroid hormone (115 aa).

The first 25 residues, methionine 1–glycine 25, serve as a signal peptide directing secretion. Residues lysine 26–arginine 31 constitute a propeptide that is removed on maturation. The important for receptor binding stretch occupies residues arginine 51 to glycine 69. Residues glutamate 76–glycine 101 form a disordered region.

The protein belongs to the parathyroid hormone family. Interacts with PTH1R (via N-terminal extracellular domain). In terms of tissue distribution, hypothalamus and parathyroid gland.

It localises to the secreted. Parathyroid hormone elevates calcium level by dissolving the salts in bone and preventing their renal excretion. Acts by binding to its receptor, PTH1R, activating G protein-coupled receptor signaling. Stimulates [1-14C]-2-deoxy-D-glucose (2DG) transport and glycogen synthesis in osteoblastic cells. This is Parathyroid hormone (Pth) from Rattus norvegicus (Rat).